A 129-amino-acid chain; its full sequence is D-ribose pyranase 1 (129 aa).

Catalysis depends on His-20, which acts as the Proton donor. Substrate is bound by residues Asp-28, His-96, and 118–120 (YSN).

The protein belongs to the RbsD / FucU family. RbsD subfamily. In terms of assembly, homodecamer.

Its subcellular location is the cytoplasm. The enzyme catalyses beta-D-ribopyranose = beta-D-ribofuranose. Its pathway is carbohydrate metabolism; D-ribose degradation; D-ribose 5-phosphate from beta-D-ribopyranose: step 1/2. Its function is as follows. Catalyzes the interconversion of beta-pyran and beta-furan forms of D-ribose. The chain is D-ribose pyranase 1 from Rubrobacter xylanophilus (strain DSM 9941 / JCM 11954 / NBRC 16129 / PRD-1).